A 556-amino-acid polypeptide reads, in one-letter code: Non-structural maintenance of chromosome element 5 (556 aa).

In terms of assembly, component of the Smc5-Smc6 complex which consists of KRE29, MMS21, NSE1, NSE3, NSE4, NSE5, SMC5 and SMC6. Interacts with KRE29.

Its subcellular location is the nucleus. The protein localises to the chromosome. Its function is as follows. Acts in a DNA repair pathway for removal of UV-induced DNA damage that is distinct from classical nucleotide excision repair and in repair of ionizing radiation damage. Functions in homologous recombination repair of DNA double strand breaks and in recovery of stalled replication forks. The chain is Non-structural maintenance of chromosome element 5 (NSE5) from Saccharomyces cerevisiae (strain ATCC 204508 / S288c) (Baker's yeast).